Reading from the N-terminus, the 378-residue chain is Erythronate-4-phosphate dehydrogenase (378 aa).

Residues Ser-45 and Thr-66 each coordinate substrate. 2 residues coordinate NAD(+): Asp-146 and Thr-175. Arg-208 is a catalytic residue. An NAD(+)-binding site is contributed by Asp-232. The active site involves Glu-237. Catalysis depends on His-254, which acts as the Proton donor. Position 257 (Gly-257) interacts with NAD(+). Tyr-258 contacts substrate.

It belongs to the D-isomer specific 2-hydroxyacid dehydrogenase family. PdxB subfamily. Homodimer.

The protein localises to the cytoplasm. It carries out the reaction 4-phospho-D-erythronate + NAD(+) = (R)-3-hydroxy-2-oxo-4-phosphooxybutanoate + NADH + H(+). Its pathway is cofactor biosynthesis; pyridoxine 5'-phosphate biosynthesis; pyridoxine 5'-phosphate from D-erythrose 4-phosphate: step 2/5. Functionally, catalyzes the oxidation of erythronate-4-phosphate to 3-hydroxy-2-oxo-4-phosphonooxybutanoate. The sequence is that of Erythronate-4-phosphate dehydrogenase from Shigella boydii serotype 4 (strain Sb227).